The following is a 190-amino-acid chain: GTP cyclohydrolase 1 (190 aa).

Zn(2+)-binding residues include cysteine 75, histidine 78, and cysteine 146.

Belongs to the GTP cyclohydrolase I family. In terms of assembly, toroid-shaped homodecamer, composed of two pentamers of five dimers.

The enzyme catalyses GTP + H2O = 7,8-dihydroneopterin 3'-triphosphate + formate + H(+). The protein operates within cofactor biosynthesis; 7,8-dihydroneopterin triphosphate biosynthesis; 7,8-dihydroneopterin triphosphate from GTP: step 1/1. The sequence is that of GTP cyclohydrolase 1 from Campylobacter jejuni (strain RM1221).